A 765-amino-acid polypeptide reads, in one-letter code: Kinesin-like protein KIN-14S (765 aa).

In terms of domain architecture, Kinesin motor spans 132 to 456 (NIRVFCRCRP…LNFASRVRGI (325 aa)). Position 215 to 222 (215 to 222 (GQTGTGKT)) interacts with ATP. The stretch at 469 to 534 (ELLKSKQMAE…ERKTRIKQES (66 aa)) forms a coiled coil. Disordered stretches follow at residues 581–613 (MPQQ…SSMD) and 654–678 (LRPE…RGDP). Positions 602–611 (NNNSNRRSSS) are enriched in low complexity.

This sequence belongs to the TRAFAC class myosin-kinesin ATPase superfamily. Kinesin family. KIN-14 subfamily.

The chain is Kinesin-like protein KIN-14S from Arabidopsis thaliana (Mouse-ear cress).